The primary structure comprises 423 residues: Enolase (423 aa).

Gln164 is a binding site for (2R)-2-phosphoglycerate. The active-site Proton donor is Glu206. Mg(2+) contacts are provided by Asp243, Glu289, and Asp316. The (2R)-2-phosphoglycerate site is built by Lys341, Arg370, Ser371, and Lys392. Lys341 serves as the catalytic Proton acceptor.

The protein belongs to the enolase family. Mg(2+) is required as a cofactor.

It is found in the cytoplasm. The protein localises to the secreted. The protein resides in the cell surface. It catalyses the reaction (2R)-2-phosphoglycerate = phosphoenolpyruvate + H2O. It participates in carbohydrate degradation; glycolysis; pyruvate from D-glyceraldehyde 3-phosphate: step 4/5. Functionally, catalyzes the reversible conversion of 2-phosphoglycerate (2-PG) into phosphoenolpyruvate (PEP). It is essential for the degradation of carbohydrates via glycolysis. This chain is Enolase, found in Desulfotalea psychrophila (strain LSv54 / DSM 12343).